The following is a 441-amino-acid chain: Xylose isomerase (441 aa).

Active-site residues include His99 and Asp102. Glu230, Glu266, His269, Asp294, Asp305, Asp307, and Asp337 together coordinate Mg(2+).

Belongs to the xylose isomerase family. Homotetramer. The cofactor is Mg(2+).

It localises to the cytoplasm. It carries out the reaction alpha-D-xylose = alpha-D-xylulofuranose. Its function is as follows. Exhibits xylose isomerase activity. This Bacillus sp. (strain LW2) protein is Xylose isomerase (xylA).